A 227-amino-acid polypeptide reads, in one-letter code: Cytochrome c oxidase subunit 2 (227 aa).

Topologically, residues 1–14 are mitochondrial intermembrane; sequence MAYPFQLGFQDATS. A helical transmembrane segment spans residues 15–45; it reads PIMEELLHFHDHTLMIVFLISSLVLYIISSM. Residues 46 to 59 lie on the Mitochondrial matrix side of the membrane; it reads LTTKLTHTSTMDAQ. Residues 60–87 traverse the membrane as a helical segment; sequence EVETIWTILPAIILILIALPSLRILYMM. Residues 88–227 lie on the Mitochondrial intermembrane side of the membrane; sequence DEINNPSLTV…YFEEWSASML (140 aa). Histidine 161, cysteine 196, glutamate 198, cysteine 200, histidine 204, and methionine 207 together coordinate Cu cation. Glutamate 198 lines the Mg(2+) pocket.

Belongs to the cytochrome c oxidase subunit 2 family. In terms of assembly, component of the cytochrome c oxidase (complex IV, CIV), a multisubunit enzyme composed of 14 subunits. The complex is composed of a catalytic core of 3 subunits MT-CO1, MT-CO2 and MT-CO3, encoded in the mitochondrial DNA, and 11 supernumerary subunits COX4I, COX5A, COX5B, COX6A, COX6B, COX6C, COX7A, COX7B, COX7C, COX8 and NDUFA4, which are encoded in the nuclear genome. The complex exists as a monomer or a dimer and forms supercomplexes (SCs) in the inner mitochondrial membrane with NADH-ubiquinone oxidoreductase (complex I, CI) and ubiquinol-cytochrome c oxidoreductase (cytochrome b-c1 complex, complex III, CIII), resulting in different assemblies (supercomplex SCI(1)III(2)IV(1) and megacomplex MCI(2)III(2)IV(2)). Found in a complex with TMEM177, COA6, COX18, COX20, SCO1 and SCO2. Interacts with TMEM177 in a COX20-dependent manner. Interacts with COX20. Interacts with COX16. The cofactor is Cu cation.

It localises to the mitochondrion inner membrane. It catalyses the reaction 4 Fe(II)-[cytochrome c] + O2 + 8 H(+)(in) = 4 Fe(III)-[cytochrome c] + 2 H2O + 4 H(+)(out). In terms of biological role, component of the cytochrome c oxidase, the last enzyme in the mitochondrial electron transport chain which drives oxidative phosphorylation. The respiratory chain contains 3 multisubunit complexes succinate dehydrogenase (complex II, CII), ubiquinol-cytochrome c oxidoreductase (cytochrome b-c1 complex, complex III, CIII) and cytochrome c oxidase (complex IV, CIV), that cooperate to transfer electrons derived from NADH and succinate to molecular oxygen, creating an electrochemical gradient over the inner membrane that drives transmembrane transport and the ATP synthase. Cytochrome c oxidase is the component of the respiratory chain that catalyzes the reduction of oxygen to water. Electrons originating from reduced cytochrome c in the intermembrane space (IMS) are transferred via the dinuclear copper A center (CU(A)) of subunit 2 and heme A of subunit 1 to the active site in subunit 1, a binuclear center (BNC) formed by heme A3 and copper B (CU(B)). The BNC reduces molecular oxygen to 2 water molecules using 4 electrons from cytochrome c in the IMS and 4 protons from the mitochondrial matrix. The polypeptide is Cytochrome c oxidase subunit 2 (MT-CO2) (Equus asinus (Donkey)).